We begin with the raw amino-acid sequence, 312 residues long: Olfactory receptor 1F1 (312 aa).

The Extracellular segment spans residues 1–25; the sequence is MSGTNQSSVSEFLLLGLSRQPQQQH. Asparagine 5 carries N-linked (GlcNAc...) asparagine glycosylation. A helical membrane pass occupies residues 26–49; sequence LLFVFFLSMYLATVLGNLLIILSV. The Cytoplasmic segment spans residues 50–57; the sequence is SIDSCLHT. Residues 58-79 traverse the membrane as a helical segment; it reads PMYFFLSNLSFVDICFSFTTVP. At 80-100 the chain is on the extracellular side; sequence KMLANHILETQTISFCGCLTQ. A disulfide bridge links cysteine 97 with cysteine 189. Residues 101–120 traverse the membrane as a helical segment; the sequence is MYFVFMFVDMDNFLLAVMAY. The Cytoplasmic segment spans residues 121–139; the sequence is DHFVAVCHPLHYTAKMTHQ. Residues 140–158 traverse the membrane as a helical segment; it reads LCALLVAGLWVVANLNVLL. Residues 159–196 are Extracellular-facing; that stretch reads HTLLMAPLSFCADNAITHFFCDVTPLLKLSCSDTHLNE. A helical membrane pass occupies residues 197–219; the sequence is VIILSEGALVMITPFLCILASYM. Over 220-236 the chain is Cytoplasmic; that stretch reads HITCTVLKVPSTKGRWK. The chain crosses the membrane as a helical span at residues 237-259; that stretch reads AFSTCGSHLAVVLLFYSTIIAVY. Over 260-272 the chain is Extracellular; the sequence is FNPLSSHSAEKDT. The chain crosses the membrane as a helical span at residues 273-292; sequence MATVLYTVVTPMLNPFIYSL. Residues 293–312 are Cytoplasmic-facing; that stretch reads RNRYLKGALKKVVGRVVFSV.

This sequence belongs to the G-protein coupled receptor 1 family.

It is found in the cell membrane. Its function is as follows. Odorant receptor. The sequence is that of Olfactory receptor 1F1 (OR1F1) from Homo sapiens (Human).